Reading from the N-terminus, the 85-residue chain is Large ribosomal subunit protein bL27 (85 aa).

Positions 1–13 are enriched in polar residues; that stretch reads MAKTKSGGSTSNG. The disordered stretch occupies residues 1 to 26; it reads MAKTKSGGSTSNGRDSKGRRLGQKLG.

Belongs to the bacterial ribosomal protein bL27 family.

The polypeptide is Large ribosomal subunit protein bL27 (Mycoplasma mobile (strain ATCC 43663 / 163K / NCTC 11711) (Mesomycoplasma mobile)).